Consider the following 352-residue polypeptide: Fructose-1,6-bisphosphatase class 1 (352 aa).

Residues Glu-111, Asp-133, Ile-135, and Asp-136 each coordinate Mg(2+). Substrate-binding positions include 136 to 139 (DGSS), Asn-228, Tyr-256, and Lys-286. Glu-292 lines the Mg(2+) pocket.

It belongs to the FBPase class 1 family. In terms of assembly, homotetramer. Requires Mg(2+) as cofactor.

Its subcellular location is the cytoplasm. The enzyme catalyses beta-D-fructose 1,6-bisphosphate + H2O = beta-D-fructose 6-phosphate + phosphate. Its pathway is carbohydrate biosynthesis; Calvin cycle. The protein is Fructose-1,6-bisphosphatase class 1 of Crocosphaera subtropica (strain ATCC 51142 / BH68) (Cyanothece sp. (strain ATCC 51142)).